Here is a 634-residue protein sequence, read N- to C-terminus: Chaperone protein HtpG (634 aa).

The segment at 1-342 (MTVDTDKQTL…SSDLSLNVSR (342 aa)) is a; substrate-binding. A b region spans residues 343–559 (EILQSGPVVD…QGDLGLQMRQ (217 aa)). The c stretch occupies residues 560 to 634 (LLEASGQAVP…LNKLLLELSV (75 aa)).

Belongs to the heat shock protein 90 family. As to quaternary structure, homodimer.

It is found in the cytoplasm. Molecular chaperone. Has ATPase activity. This is Chaperone protein HtpG from Xanthomonas oryzae pv. oryzae (strain MAFF 311018).